Reading from the N-terminus, the 682-residue chain is Solute carrier organic anion transporter family member 2B1 (682 aa).

Positions 1 to 30 (MPDRSTKATMGAEDIHERKVSMEPRDSHQD) are disordered. The Cytoplasmic portion of the chain corresponds to 1 to 41 (MPDRSTKATMGAEDIHERKVSMEPRDSHQDAQPRGMFQNIK). Residues 13-30 (EDIHERKVSMEPRDSHQD) are compositionally biased toward basic and acidic residues. Ser21 carries the phosphoserine modification. Residues 42-61 (FFVLCHSILQLAQLMISGYL) traverse the membrane as a helical segment. At 62-80 (KSSISTVEKRFGLSSQTSG) the chain is on the extracellular side. Residues 81-101 (LLAAFNEVGNISLILFVSYFG) form a helical membrane-spanning segment. Residues 102 to 107 (SRVHRP) are Cytoplasmic-facing. Residues 108-132 (RMIGCGAILVAVAGLLMALPHFISE) form a helical membrane-spanning segment. Residues 133-176 (PYRYDHSSPDRSQDFEASLCLPTTMAPASALSNDSCSSRTETKH) are Extracellular-facing. Asn165 carries an N-linked (GlcNAc...) asparagine glycan. A helical transmembrane segment spans residues 177-206 (LTMVGIMFTAQTLLGIGGVPIQPFGISYID). At 207-225 (DFAHHSNSPLYLGILFAIT) the chain is on the cytoplasmic side. The helical transmembrane segment at 226–246 (MMGPGLAYGLGSLMLRLYVDI) threads the bilayer. The Extracellular segment spans residues 247–264 (DRMPEGGINLTTKDPRWV). An N-linked (GlcNAc...) asparagine glycan is attached at Asn255. Residues 265–289 (GAWWLGFLISAGLVVLAASPYFFFP) traverse the membrane as a helical segment. The Cytoplasmic portion of the chain corresponds to 290–354 (REMPKEKYEL…IKVFPRVLLR (65 aa)). 2 positions are modified to phosphoserine: Ser311 and Ser314. Residues 355-376 (TLRHPIFLLVVLSQVCTSSMVA) form a helical membrane-spanning segment. At 377–396 (GTATFLPKFLERQFSITASF) the chain is on the extracellular side. Residues 397-420 (ANLLLGCLTIPLAIVGIVVGGVLV) traverse the membrane as a helical segment. At 421 to 424 (KRLH) the chain is on the cytoplasmic side. Residues 425 to 448 (LSPMQCSALCLLGSLLCLLLSLPL) traverse the membrane as a helical segment. At 449-552 (FFIGCSTHHI…SACSRLVLPF (104 aa)) the chain is on the extracellular side. A Kazal-like domain is found at 471-531 (PSLFPGCSEP…VFYTNCSCVA (61 aa)). Cystine bridges form between Cys477-Cys508, Cys483-Cys504, and Cys492-Cys529. 2 N-linked (GlcNAc...) asparagine glycosylation sites follow: Asn526 and Asn533. A helical transmembrane segment spans residues 553–575 (ILLISLGAAVASITHTPSFMLIL). Residues 576 to 584 (RGVKKEDKT) are Cytoplasmic-facing. A helical transmembrane segment spans residues 585–610 (LAVGMQFMLLRVLAWMPSPVIHGSAI). The Extracellular segment spans residues 611-643 (DTTCVHWALTCGRRAVCRYYDHDLLRNRFIGLQ). A helical transmembrane segment spans residues 644-661 (FFFKSGSLVCFALVLAIL). Topologically, residues 662 to 682 (RQQSREASTKATVKSSDLQEL) are cytoplasmic.

This sequence belongs to the organo anion transporter (TC 2.A.60) family. Expressed in liver, kidney, heart, lung and retina. Widely distributed in all brain regions.

The protein localises to the cell membrane. The protein resides in the basal cell membrane. It localises to the apical cell membrane. It catalyses the reaction coproporphyrin III(out) = coproporphyrin III(in). The catalysed reaction is substance P(out) = substance P(in). The enzyme catalyses taurocholate(out) = taurocholate(in). It carries out the reaction prostaglandin E1(out) = prostaglandin E1(in). It catalyses the reaction prostaglandin E2(out) = prostaglandin E2(in). The catalysed reaction is prostaglandin D2(out) = prostaglandin D2(in). The enzyme catalyses leukotriene C4(out) = leukotriene C4(in). It carries out the reaction L-thyroxine(out) = L-thyroxine(in). In terms of biological role, mediates the Na(+)-independent transport of organic anions such as taurocholate, the prostaglandins D2 (PGD2), E1 (PGE1) and E2 (PGE2), leukotriene C4, thromboxane B2 and L-thyroxine. Also plays a role in the reuptake of neuropeptides such as substance P/TAC1 and vasoactive intestinal peptide/VIP released from retinal neurons. May act as a heme transporter that promotes cellular iron availability. Also transports heme by-product coproporphyrin III (CPIII), and may be involved in their hepatic disposition. May contribute to regulate the transport of organic compounds in testis across the blood-testis-barrier. Shows a pH-sensitive substrate specificity which may be ascribed to the protonation state of the binding site and leads to a stimulation of substrate transport in an acidic microenvironment. The exact transport mechanism has not been yet deciphered but most likely involves an anion exchange, coupling the cellular uptake of organic substrate with the efflux of an anionic compound. Hydrogencarbonate/HCO3(-) acts as a probable counteranion that exchanges for organic anions. Cytoplasmic glutamate may also act as counteranion in the placenta. This Rattus norvegicus (Rat) protein is Solute carrier organic anion transporter family member 2B1.